A 576-amino-acid chain; its full sequence is MDIKLLYRLAKYLRFYKKDLIIVMISLLSVSASLLLIGSIFRDLIDRGLAEDNILSVNKSILYICLLIVILSVASFFRSYFINNVAEKIVNQIRKEAYSNLINYEIEEYEELKIGDIISRLTNDIDQIATLIVNFLSFFIRNSVMLIGSITLMFFESFKLASIVIITIPILLVPLIKFGKHVKALSKKALESKSLLVSDIDETFNNIRVIYAFNHQINKIADFDTKLQSYLIYCKTRLKIRALFFAISIAVIFLTITLIVWIGASDIVQGDLSAGQIISFIYYAIIAGVSSGGIFELLSEMHLPTTALERIITIIDKTSIVHNNYYALNNSDAISIEFKNVDFTYNSRPNLKVINNMSLKINSNKFVGIVGRSGAGKSTLIQLLLRFYRQENGTILINNQDISFVKPTDIRKFIAYVPQEASIFSDTIKSNIIFGNNKASDYEINEIIKITGIEEFSTKLHDGINTKIGEKGVRLSGGQKQRIAIARALLRKPKILLLDEAMSALDTMSEQKLLNAIKKIMKGNIIISIAHRISSIESADYILVIDKGGVVTEGSHYDLSKNSEIYRNICREQLTI.

Residues 20–303 form the ABC transmembrane type-1 domain; sequence LIIVMISLLS…IFELLSEMHL (284 aa). A run of 6 helical transmembrane segments spans residues 21–41, 61–81, 135–155, 158–178, 242–262, and 277–297; these read IIVM…GSIF, ILYI…RSYF, FLSF…LMFF, FKLA…LIKF, ALFF…IVWI, and IISF…IFEL. An ABC transporter domain is found at 336-572; sequence IEFKNVDFTY…SEIYRNICRE (237 aa). 371 to 378 contacts ATP; the sequence is GRSGAGKS.

It belongs to the ABC transporter superfamily. Homodimer.

The protein resides in the cell inner membrane. Its function is as follows. Part of an ABC transporter complex. Transmembrane domains (TMD) form a pore in the inner membrane and the ATP-binding domain (NBD) is responsible for energy generation. The protein is Putative export ATP-binding/permease protein RP696 of Rickettsia prowazekii (strain Madrid E).